We begin with the raw amino-acid sequence, 146 residues long: Benzoylsuccinyl-CoA thiolase subunit BbsA (146 aa).

Residues cysteine 42, cysteine 45, cysteine 55, and cysteine 58 each coordinate Zn(2+).

This sequence belongs to the BbsA family. As to quaternary structure, heterotetramer composed of two BbsA subunits and two BbsB subunits. Both BbsA and BbsB are essential for enzymatic activity.

It carries out the reaction (S)-2-benzoylsuccinyl-CoA + CoA = benzoyl-CoA + succinyl-CoA. The protein operates within xenobiotic degradation; toluene degradation. Functionally, component of the BbsAB thiolase complex, which catalyzes the thiolytic cleavage of (S)-2-benzoylsuccinyl-CoA to succinyl-CoA and benzoyl-CoA, the final step of anaerobic toluene metabolism. The BbsA subunit critically contributes to an induced-fit process for productive binding of a CoA substrate into the active site of BbsB. The chain is Benzoylsuccinyl-CoA thiolase subunit BbsA from Geobacter metallireducens (strain ATCC 53774 / DSM 7210 / GS-15).